The sequence spans 291 residues: MEKDAPLAATGTPSLMAQAKEMMEGYTLRARKGLGQHFLISQGVLNKILLAADLKPTDTVIEVGPGLGVLTEELIKRAGQVIAVELDDKLVTALTEKFKAYPNFRIIHSDILKTSPAEILGQNIPYKLVANLPYYITSAVLRQFLEAEAKPELMVVMVQKEVAKNMVAQTGDMGLLTLSVRFYGNPSLVSVVPGGAFYPPPEVDSAIVKVAIPQAAIMQGVSEADFFKLARAGFGTRRKTLLNALAQGLGVSKQSVLALLNRAGIEPARRAETLSMEEWKMLCLVYTENPC.

S-adenosyl-L-methionine-binding residues include histidine 37, leucine 39, glycine 64, glutamate 85, aspartate 110, and asparagine 131.

Belongs to the class I-like SAM-binding methyltransferase superfamily. rRNA adenine N(6)-methyltransferase family. RsmA subfamily.

The protein resides in the cytoplasm. It catalyses the reaction adenosine(1518)/adenosine(1519) in 16S rRNA + 4 S-adenosyl-L-methionine = N(6)-dimethyladenosine(1518)/N(6)-dimethyladenosine(1519) in 16S rRNA + 4 S-adenosyl-L-homocysteine + 4 H(+). Specifically dimethylates two adjacent adenosines (A1518 and A1519) in the loop of a conserved hairpin near the 3'-end of 16S rRNA in the 30S particle. May play a critical role in biogenesis of 30S subunits. The polypeptide is Ribosomal RNA small subunit methyltransferase A (Dehalococcoides mccartyi (strain ATCC BAA-2266 / KCTC 15142 / 195) (Dehalococcoides ethenogenes (strain 195))).